Reading from the N-terminus, the 1433-residue chain is DNA-directed RNA polymerase subunit beta' (1433 aa).

The Zn(2+) site is built by Cys-66, Cys-68, Cys-81, and Cys-84. Positions 328-347 (RKSSAVKTDSNRPLKSLSDS) are disordered. Polar residues predominate over residues 329–346 (KSSAVKTDSNRPLKSLSD). The Mg(2+) site is built by Asp-477, Asp-479, and Asp-481. Positions 825, 899, 906, and 909 each coordinate Zn(2+).

It belongs to the RNA polymerase beta' chain family. The RNAP catalytic core consists of 2 alpha, 1 beta, 1 beta' and 1 omega subunit. When a sigma factor is associated with the core the holoenzyme is formed, which can initiate transcription. The cofactor is Mg(2+). Requires Zn(2+) as cofactor.

It catalyses the reaction RNA(n) + a ribonucleoside 5'-triphosphate = RNA(n+1) + diphosphate. Functionally, DNA-dependent RNA polymerase catalyzes the transcription of DNA into RNA using the four ribonucleoside triphosphates as substrates. The protein is DNA-directed RNA polymerase subunit beta' of Christiangramia forsetii (strain DSM 17595 / CGMCC 1.15422 / KT0803) (Gramella forsetii).